We begin with the raw amino-acid sequence, 64 residues long: DNA-directed RNA polymerase subunit omega (64 aa).

This sequence belongs to the RNA polymerase subunit omega family. In terms of assembly, the RNAP catalytic core consists of 2 alpha, 1 beta, 1 beta' and 1 omega subunit. When a sigma factor is associated with the core the holoenzyme is formed, which can initiate transcription.

It carries out the reaction RNA(n) + a ribonucleoside 5'-triphosphate = RNA(n+1) + diphosphate. In terms of biological role, promotes RNA polymerase assembly. Latches the N- and C-terminal regions of the beta' subunit thereby facilitating its interaction with the beta and alpha subunits. The sequence is that of DNA-directed RNA polymerase subunit omega from Oceanobacillus iheyensis (strain DSM 14371 / CIP 107618 / JCM 11309 / KCTC 3954 / HTE831).